We begin with the raw amino-acid sequence, 1006 residues long: Transmembrane channel-like protein 5 (1006 aa).

The segment at 1–289 is disordered; it reads MSAYYRNNWS…DDPVGSLWGE (289 aa). The Extracellular segment spans residues 1-458; that stretch reads MSAYYRNNWS…YFNFLRWLLK (458 aa). Polar residues-rich tracts occupy residues 20–30, 50–59, and 76–101; these read SGSQNRTQGYL, TRSNPYSVAS, and RSLS…SPDH. A compositionally biased stretch (low complexity) spans 138–149; sequence AGSSSSGNYAGS. Over residues 239–250 the composition is skewed to basic and acidic residues; the sequence is REPDYSDAENGH. The chain crosses the membrane as a helical span at residues 459–479; the sequence is FNIFSFILNFSFIIIPQFTVA. Over 480-485 the chain is Cytoplasmic; sequence KKNTLQ. A helical membrane pass occupies residues 486-508; sequence FTGLEFFTGVGYFRDTVMYYGFY. Residues 509–525 are Extracellular-facing; that stretch reads TNSTIQHGNSGASYNMQ. The chain crosses the membrane as a helical span at residues 526–546; that stretch reads LAYIFTIGACLTTCFFSLLFS. The Cytoplasmic portion of the chain corresponds to 547-619; it reads MAKYFRNNFI…NQLLTRFSAY (73 aa). Residues 620 to 640 traverse the membrane as a helical segment; it reads MVAWVVSTGVAIACCAAVYYL. At 641 to 654 the chain is on the extracellular side; it reads AEYNLEFLKTHSNP. The chain crosses the membrane as a helical span at residues 655–675; that stretch reads GAVLLLPFVVSCINLAVPCIY. The Cytoplasmic segment spans residues 676–698; that stretch reads SMFRLVERYEMPRHEVYVLLIRN. The chain crosses the membrane as a helical span at residues 699–719; that stretch reads IFLKISIIGILCYYWLNTVAL. At 720 to 732 the chain is on the extracellular side; sequence SGEECWETLIGQD. A helical membrane pass occupies residues 733 to 753; sequence IYRLLLMDFVFSLVNSFLGEF. The Cytoplasmic segment spans residues 754–786; it reads LRRIIGMQLITSLGLQEFDIARNVLELIYAQTL. The chain crosses the membrane as a helical span at residues 787-807; the sequence is VWIGIFFCPLLPFIQMIMLFI. Over 808 to 835 the chain is Extracellular; sequence MFYSKNISLMMNFQPPSKAWRASQMMTF. Residues 836–856 form a helical membrane-spanning segment; that stretch reads FIFLLFFPSFTGVLCTLAITI. Over 857–900 the chain is Cytoplasmic; that stretch reads WRLKPSADCGPFRGLPLFIHSIYSWIDTLSTRPGYLWVVWIYRN. Residues 901-921 traverse the membrane as a helical segment; the sequence is LIGSVHFFFILTLIVLIITYL. Over 922-1006 the chain is Extracellular; the sequence is YWQITEGRKI…RSVQEGNPRA (85 aa).

Belongs to the TMC family.

Its subcellular location is the membrane. Functionally, probable component of an ion channel. Molecular function hasn't been characterized yet. This Homo sapiens (Human) protein is Transmembrane channel-like protein 5.